Consider the following 530-residue polypeptide: Cation transporter HKT2;2 (530 aa).

At 1-40 (MTSIYQEFIHTKCQSFRSIGRYVLHSIVLIYRFVSLHVHP) the chain is on the cytoplasmic side. 2 helical membrane-spanning segments follow: residues 41-61 (FWIQLSYFLLISILGSVLLMF) and 102-122 (IVVLTLLMLVGGEVFVSFLGL). Topologically, residues 123 to 186 (MLRLKHKHNP…DLKRSKRLRW (64 aa)) are cytoplasmic. 2 helical membrane-spanning segments follow: residues 187–207 (FLGFVVFSYFVVIHVVGFLLV) and 260–280 (GLLLLFIGQILAGNTLYPLFL). Residues 281–317 (RILIWFLGKVTKLKDLKLMIKNSDELQYDYLLPKLPT) lie on the Cytoplasmic side of the membrane. Transmembrane regions (helical) follow at residues 318-338 (AFLASTVIGLMASLVTLFGSV) and 372-392 (IDCSLIAPAVLVLFIILMYLP). The Cytoplasmic segment spans residues 393 to 420 (PSTTFALSNGDEKTANKKAKRKLGLVVR). The next 2 membrane-spanning stretches (helical) occupy residues 421 to 441 (NLAFSQLACNAVFVIVALITE) and 494 to 514 (SLSGWWSDEGKLLLVSVMLYG). Residues 515 to 530 (RLKAFTKGTGEYWRLW) are Cytoplasmic-facing.

The protein belongs to the TrkH potassium transport family. HKT (TC 2.A.38.3) subfamily.

It localises to the membrane. In terms of biological role, seems to be involved in regulation of potassium-sodium homeostasis. Seems to act as a potassium-sodium cotransporter, which mediates increased potassium uptake under external sodium accumulation and contributes to salt-tolerance in cultivar indica Pokkali. This Oryza sativa subsp. indica (Rice) protein is Cation transporter HKT2;2.